Reading from the N-terminus, the 437-residue chain is Enolase (437 aa).

Glutamine 163 contacts (2R)-2-phosphoglycerate. The active-site Proton donor is glutamate 205. Positions 242, 285, and 312 each coordinate Mg(2+). Residues lysine 337, arginine 366, serine 367, and lysine 388 each contribute to the (2R)-2-phosphoglycerate site. Lysine 337 (proton acceptor) is an active-site residue.

Belongs to the enolase family. Mg(2+) is required as a cofactor.

It localises to the cytoplasm. Its subcellular location is the secreted. It is found in the cell surface. It carries out the reaction (2R)-2-phosphoglycerate = phosphoenolpyruvate + H2O. It functions in the pathway carbohydrate degradation; glycolysis; pyruvate from D-glyceraldehyde 3-phosphate: step 4/5. Its function is as follows. Catalyzes the reversible conversion of 2-phosphoglycerate (2-PG) into phosphoenolpyruvate (PEP). It is essential for the degradation of carbohydrates via glycolysis. This Nitratidesulfovibrio vulgaris (strain DP4) (Desulfovibrio vulgaris) protein is Enolase.